A 125-amino-acid polypeptide reads, in one-letter code: Small ribosomal subunit protein eS8 (125 aa).

It belongs to the eukaryotic ribosomal protein eS8 family. Part of the 30S ribosomal subunit.

This chain is Small ribosomal subunit protein eS8, found in Methanosarcina barkeri (strain Fusaro / DSM 804).